The chain runs to 420 residues: Glutamyl-tRNA reductase (420 aa).

Residues Thr49 to Arg52, Ser109, Glu114 to Gln116, and Gln120 contribute to the substrate site. The active-site Nucleophile is Cys50. Gly189–Ile194 contacts NADP(+).

The protein belongs to the glutamyl-tRNA reductase family. Homodimer.

The catalysed reaction is (S)-4-amino-5-oxopentanoate + tRNA(Glu) + NADP(+) = L-glutamyl-tRNA(Glu) + NADPH + H(+). It functions in the pathway porphyrin-containing compound metabolism; protoporphyrin-IX biosynthesis; 5-aminolevulinate from L-glutamyl-tRNA(Glu): step 1/2. In terms of biological role, catalyzes the NADPH-dependent reduction of glutamyl-tRNA(Glu) to glutamate 1-semialdehyde (GSA). The chain is Glutamyl-tRNA reductase from Serratia proteamaculans (strain 568).